The primary structure comprises 324 residues: Olfactory receptor 11H4 (324 aa).

The Extracellular segment spans residues 1 to 35 (MSFFFVDLRPMNRSATHIVTEFILLGFPGCWKIQI). An N-linked (GlcNAc...) asparagine glycan is attached at Asn12. A helical transmembrane segment spans residues 36–56 (FLFSLFLVIYVLTLLGNGAII). The Cytoplasmic segment spans residues 57 to 64 (YAVRCNPL). A helical membrane pass occupies residues 65–85 (LHTPMYFLLGNFAFLEIWYVS). The Extracellular portion of the chain corresponds to 86 to 109 (STIPNMLVNILSKTKAISFSGCFL). The cysteines at positions 107 and 199 are disulfide-linked. Residues 110–130 (QFYFFFSLGTTECLFLAVMAY) form a helical membrane-spanning segment. The Cytoplasmic portion of the chain corresponds to 131–149 (DRYLAICHPLQYPAIMTVR). The helical transmembrane segment at 150–170 (FCGKLVSFCWLIGFLGYPIPI) threads the bilayer. Residues 171-207 (FYISQLPFCGPNIIDHFLCDMDPLMALSCAPAPITEC) lie on the Extracellular side of the membrane. The chain crosses the membrane as a helical span at residues 208–227 (IFYTQSSLVLFFTSMYILRS). Topologically, residues 228 to 247 (YILLLTAVFQVPSAAGRRKA) are cytoplasmic. Residues 248–268 (FSTCGSHLVVVSLFYGTVMVM) form a helical membrane-spanning segment. Over 269-281 (YVSPTYGIPTLLQ) the chain is Extracellular. The chain crosses the membrane as a helical span at residues 282–302 (KILTLVYSVTTPLFNPLIYTL). Residues 303-324 (RNKDMKLALRNVLFGMRIRQNS) are Cytoplasmic-facing.

Belongs to the G-protein coupled receptor 1 family.

It localises to the cell membrane. Odorant receptor. This Homo sapiens (Human) protein is Olfactory receptor 11H4 (OR11H4).